Consider the following 137-residue polypeptide: DNA polymerase III subunit psi (137 aa).

Belongs to the DNA polymerase III psi/HolD chain family. The DNA polymerase III holoenzyme complex contains at least 10 different subunits organized into 3 functionally essential subassemblies: the Pol III core, the beta sliding clamp processivity factor and the clamp-loading complex. The Pol III core (subunits alpha, epsilon and theta) contains the polymerase and the 3'-5' exonuclease proofreading activities. The polymerase is tethered to the template via the dimeric beta sliding clamp processivity factor. The clamp-loading complex (also called gamma complex) assembles the beta sliding clamp onto the primed template and plays a central role in the organization and communication at the replication fork. The clamp-loading complex contains delta, delta', psi and chi, and 3 copies of either or both of two different DnaX proteins, gamma and tau. The DNA replisome complex has a single clamp loader (3 tau and 1 each of delta, delta', psi and chi subunits) which binds 3 Pol III cores (1 core on the leading strand and 2 on the lagging strand) each with a beta sliding clamp dimer. Additional proteins in the replisome are other copies of gamma, psi (this protein) and chi (holC), SSB, DNA helicase and RNA primase. The clamp loader hydrolyzes ATP to assemble the beta processivity factor onto the primed template and plays a central role in the organization and communication at the replication fork. Interacts directly with the chi subunit (holC).

The catalysed reaction is DNA(n) + a 2'-deoxyribonucleoside 5'-triphosphate = DNA(n+1) + diphosphate. In terms of biological role, part of the beta sliding clamp loading complex, which hydrolyzes ATP to load the beta clamp onto primed DNA to form the DNA replication pre-initiation complex. DNA polymerase III is a complex, multichain enzyme responsible for most of the replicative synthesis in bacteria. This DNA polymerase also exhibits 3' to 5' exonuclease activity. In Escherichia coli (strain K12), this protein is DNA polymerase III subunit psi.